A 493-amino-acid polypeptide reads, in one-letter code: Dipeptide permease D (493 aa).

13 helical membrane passes run 14–34 (VVALQIWEYFSFYGMRALLIL), 49–69 (ALFSAYCSLVYVTPILGGYLA), 91–111 (LVLGASEIAPTFLYLSLAIIV), 138–158 (GGFSLLYAAGNVGSIVAPIAC), 167–187 (WAMGFALAAIGMVAGLIIFLC), 212–232 (NWGWLLVLLTIAPLAIAVLFW), 235–255 (WAVYALIVATAIGLAVLGKIY), 267–287 (LGLIVTLTFFSMLFWAFAQQG), 312–332 (MFQSVNAFAVMLCGVVLAWLI), 344–364 (IWGKFALGLGLMSAGFSILTL), 379–399 (LMIAGLAVMGFAELFIDPVAM), 413–433 (VLTGIYMLLSGAIANYLAGVI), and 458–478 (VFSEITWGALACVGLVLLIWL).

The protein belongs to the major facilitator superfamily. Proton-dependent oligopeptide transporter (POT/PTR) (TC 2.A.17) family. DtpD subfamily.

It is found in the cell inner membrane. Functionally, probable proton-dependent permease that transports dipeptides. This chain is Dipeptide permease D, found in Citrobacter rodentium (strain ICC168) (Citrobacter freundii biotype 4280).